The primary structure comprises 236 residues: 4-aminobenzoate synthase (236 aa).

Positions 87, 94, 148, 180, 184, and 187 each coordinate Fe(2+).

It belongs to the CADD family. As to quaternary structure, homodimer. Fe(2+) is required as a cofactor. Requires Mn(2+) as cofactor.

Its function is as follows. Involved in de novo para-aminobenzoate (PABA) biosynthesis. Acts as a self-sacrificing or 'suicide' enzyme that utilizes its own active site tyrosine residue(s) as the substrate for PABA synthesis. The side chain of the tyrosine residue is released from the protein backbone via cleavage of the C(alpha)-C(beta) bond, leaving a glycine in place of the original tyrosine residue. Reaction requires O(2) and a reduced dimetal cofactor. This is 4-aminobenzoate synthase from Chlamydia muridarum (strain MoPn / Nigg).